A 145-amino-acid chain; its full sequence is Peptidyl-lysine N-acetyltransferase YjaB (145 aa).

Positions 3–144 (INIRRSRHEE…KPYPLLNLIY (142 aa)) constitute an N-acetyltransferase domain.

This sequence belongs to the acetyltransferase family.

The catalysed reaction is L-lysyl-[protein] + acetyl-CoA = N(6)-acetyl-L-lysyl-[protein] + CoA + H(+). Functionally, N-epsilon-lysine acetyltransferase that catalyzes acetylation of a large number of proteins. The polypeptide is Peptidyl-lysine N-acetyltransferase YjaB (yjaB) (Salmonella typhimurium (strain LT2 / SGSC1412 / ATCC 700720)).